Reading from the N-terminus, the 490-residue chain is uncharacterized protein (490 aa).

Residues 1-19 (MSITSVSLYVYLICAGGHA) form the signal peptide.

It belongs to the mimivirus L137 family.

This is an uncharacterized protein from Acanthamoeba polyphaga (Amoeba).